We begin with the raw amino-acid sequence, 116 residues long: Protein lin-52 homolog (116 aa).

Ser-28 and Ser-53 each carry phosphoserine.

It belongs to the lin-52 family. As to quaternary structure, component of the DREAM complex (also named LINC complex) at least composed of E2F4, E2F5, LIN9, LIN37, LIN52, LIN54, MYBL1, MYBL2, RBL1, RBL2, RBBP4, TFDP1 and TFDP2. The complex exists in quiescent cells where it represses cell cycle-dependent genes. It dissociates in S phase when LIN9, LIN37, LIN52 and LIN54 form a subcomplex that binds to MYBL2.

This chain is Protein lin-52 homolog (LIN52), found in Homo sapiens (Human).